Reading from the N-terminus, the 427-residue chain is Protein TolB homolog (427 aa).

Residues 1–20 (MLRRIFVSTFLVFGIVSLYA) form the signal peptide.

The protein belongs to the TolB family.

The protein localises to the periplasm. The protein is Protein TolB homolog of Chlamydia caviae (strain ATCC VR-813 / DSM 19441 / 03DC25 / GPIC) (Chlamydophila caviae).